Reading from the N-terminus, the 364-residue chain is Anthranilate N-methyltransferase (364 aa).

The segment at 1 to 20 is disordered; the sequence is MGSLSESHTQYKHGVEVEED. Positions 209, 232, 253, and 266 each coordinate S-adenosyl-L-methionine. The active-site Proton acceptor is the His270.

Belongs to the class I-like SAM-binding methyltransferase superfamily. Cation-independent O-methyltransferase family. COMT subfamily. In terms of assembly, homodimer. In terms of tissue distribution, expressed in leaves, flowers, stems and roots. Detected in the vascular tissues in stems, in the rhizodermis or the endodermis of roots, in the inside of carpels, in the central vascular bundles of the syncarp ovary and in the secretory oil glands located around the outer ovary wall.

It carries out the reaction anthranilate + S-adenosyl-L-methionine = N-methylanthranilate + S-adenosyl-L-homocysteine + H(+). Inhibited by Ca(2+), Co(2+), Fe(2+), Fe(3+), Cu(2+) or Zn(2+). No effect of Mg(2+). In terms of biological role, involved in the biosynthesis of acridine alkaloids. N-methyltransferase with a strict substrate specificity for anthranilate. No activity with anthranilic acid methyl ester, anthraniloyl CoA, 3- or 4-amino-benzoic acid, salicylic acid, catechol, eugenol, caffeic acid, quercetin, theobromin, theophyllin, putrescine and nicotinic acid among others. In Ruta graveolens (Common rue), this protein is Anthranilate N-methyltransferase.